Reading from the N-terminus, the 468-residue chain is Probable Xaa-Pro aminopeptidase pepP (468 aa).

Positions 264, 275, 398, and 438 each coordinate Mn(2+).

It belongs to the peptidase M24B family. Mn(2+) is required as a cofactor.

The enzyme catalyses Release of any N-terminal amino acid, including proline, that is linked to proline, even from a dipeptide or tripeptide.. In terms of biological role, catalyzes the removal of a penultimate prolyl residue from the N-termini of peptides. This chain is Probable Xaa-Pro aminopeptidase pepP (pepP), found in Talaromyces stipitatus (strain ATCC 10500 / CBS 375.48 / QM 6759 / NRRL 1006) (Penicillium stipitatum).